Consider the following 89-residue polypeptide: Small ribosomal subunit protein uS15 (89 aa).

This sequence belongs to the universal ribosomal protein uS15 family. In terms of assembly, part of the 30S ribosomal subunit. Forms a bridge to the 50S subunit in the 70S ribosome, contacting the 23S rRNA.

Its function is as follows. One of the primary rRNA binding proteins, it binds directly to 16S rRNA where it helps nucleate assembly of the platform of the 30S subunit by binding and bridging several RNA helices of the 16S rRNA. Forms an intersubunit bridge (bridge B4) with the 23S rRNA of the 50S subunit in the ribosome. The protein is Small ribosomal subunit protein uS15 of Bartonella henselae (strain ATCC 49882 / DSM 28221 / CCUG 30454 / Houston 1) (Rochalimaea henselae).